Consider the following 171-residue polypeptide: MFDIGFSELLLVFIIGLVVLGPQRLPVAVKTVAGWIRALRSLATTVQNELTQELKLQEFQDSLKKVEKASLTSLTPELKASMDELRQAAESMKRSYVANDPEKASDEAHTIHNPVVKDNETAHEGVTPAAAQTQASSPEQKPETTPEPVVKPAADAEPKTAAPSPSSSDKP.

The chain crosses the membrane as a helical span at residues 1 to 21; it reads MFDIGFSELLLVFIIGLVVLG. The disordered stretch occupies residues 89–171; that stretch reads AESMKRSYVA…APSPSSSDKP (83 aa). Positions 100 to 123 are enriched in basic and acidic residues; it reads DPEKASDEAHTIHNPVVKDNETAH. Positions 130 to 139 are enriched in polar residues; the sequence is AAQTQASSPE.

The protein belongs to the TatB family. As to quaternary structure, the Tat system comprises two distinct complexes: a TatABC complex, containing multiple copies of TatA, TatB and TatC subunits, and a separate TatA complex, containing only TatA subunits. Substrates initially bind to the TatABC complex, which probably triggers association of the separate TatA complex to form the active translocon.

The protein resides in the cell inner membrane. Functionally, part of the twin-arginine translocation (Tat) system that transports large folded proteins containing a characteristic twin-arginine motif in their signal peptide across membranes. Together with TatC, TatB is part of a receptor directly interacting with Tat signal peptides. TatB may form an oligomeric binding site that transiently accommodates folded Tat precursor proteins before their translocation. The chain is Sec-independent protein translocase protein TatB from Escherichia coli O1:K1 / APEC.